Consider the following 127-residue polypeptide: Major sperm protein 19/31/40/45/50/51/53/59/61/65/81/113/142 (127 aa).

Ala-2 bears the N-acetylalanine mark. In terms of domain architecture, MSP spans 9–126 (DIQTQPGTKI…RRKNLPIEYN (118 aa)).

As to quaternary structure, helical subfilaments are built from MSP dimers; filaments are formed from two subfilaments coiling round one another; and filaments themselves supercoil to produce bundles. In terms of tissue distribution, sperm.

Its subcellular location is the cell projection. The protein resides in the pseudopodium. It is found in the cytoplasm. It localises to the cytoskeleton. Central component in molecular interactions underlying sperm crawling. Forms an extensive filament system that extends from sperm villipoda, along the leading edge of the pseudopod. The chain is Major sperm protein 19/31/40/45/50/51/53/59/61/65/81/113/142 (msp-19) from Caenorhabditis elegans.